The following is a 106-amino-acid chain: Large ribosomal subunit protein P2 (106 aa).

Residues 80-106 form a disordered region; sequence AAAAPAKKVVEEKKEESDDDMGMGLFD.

The protein belongs to the eukaryotic ribosomal protein P1/P2 family. As to quaternary structure, P1 and P2 exist as dimers at the large ribosomal subunit. Phosphorylated.

Its function is as follows. Plays an important role in the elongation step of protein synthesis. This chain is Large ribosomal subunit protein P2 (rplp2), found in Dictyostelium discoideum (Social amoeba).